The following is a 776-amino-acid chain: LPS-assembly protein LptD (776 aa).

Positions 1 to 24 are cleaved as a signal peptide; that stretch reads MQHFSRTFLAASIATALFAPYAQA.

This sequence belongs to the LptD family. As to quaternary structure, component of the lipopolysaccharide transport and assembly complex. Interacts with LptE and LptA.

It localises to the cell outer membrane. Its function is as follows. Together with LptE, is involved in the assembly of lipopolysaccharide (LPS) at the surface of the outer membrane. The sequence is that of LPS-assembly protein LptD from Vibrio vulnificus (strain CMCP6).